The sequence spans 305 residues: Succinate--CoA ligase [ADP-forming] subunit alpha (305 aa).

CoA contacts are provided by residues 17-20, K43, and 96-98; these read TGKE and ITE. Residue Y161 coordinates substrate. H249 serves as the catalytic Tele-phosphohistidine intermediate.

This sequence belongs to the succinate/malate CoA ligase alpha subunit family. As to quaternary structure, heterotetramer of two alpha and two beta subunits.

The catalysed reaction is succinate + ATP + CoA = succinyl-CoA + ADP + phosphate. It carries out the reaction GTP + succinate + CoA = succinyl-CoA + GDP + phosphate. It participates in carbohydrate metabolism; tricarboxylic acid cycle; succinate from succinyl-CoA (ligase route): step 1/1. Succinyl-CoA synthetase functions in the citric acid cycle (TCA), coupling the hydrolysis of succinyl-CoA to the synthesis of either ATP or GTP and thus represents the only step of substrate-level phosphorylation in the TCA. The alpha subunit of the enzyme binds the substrates coenzyme A and phosphate, while succinate binding and nucleotide specificity is provided by the beta subunit. The protein is Succinate--CoA ligase [ADP-forming] subunit alpha of Aquifex aeolicus (strain VF5).